We begin with the raw amino-acid sequence, 248 residues long: Methionine aminopeptidase (248 aa).

Residue His-77 coordinates substrate. Residues Asp-94, Asp-105, and His-169 each coordinate a divalent metal cation. His-176 is a substrate binding site. Residues Glu-202 and Glu-233 each coordinate a divalent metal cation.

It belongs to the peptidase M24A family. Methionine aminopeptidase type 1 subfamily. Monomer. It depends on Co(2+) as a cofactor. Zn(2+) serves as cofactor. The cofactor is Mn(2+). Fe(2+) is required as a cofactor.

The catalysed reaction is Release of N-terminal amino acids, preferentially methionine, from peptides and arylamides.. In terms of biological role, removes the N-terminal methionine from nascent proteins. The N-terminal methionine is often cleaved when the second residue in the primary sequence is small and uncharged (Met-Ala-, Cys, Gly, Pro, Ser, Thr, or Val). Requires deformylation of the N(alpha)-formylated initiator methionine before it can be hydrolyzed. This is Methionine aminopeptidase from Mycoplasma genitalium (strain ATCC 33530 / DSM 19775 / NCTC 10195 / G37) (Mycoplasmoides genitalium).